Here is a 214-residue protein sequence, read N- to C-terminus: MLKPPIGILGGTFDPIHIGHLRPAIEARDALGLAEVRLLPNHIPPHRASPFCSSEQRLAMVALAAAENPGFVVDERELKRDTPSWTIDTLIELRHELPDTPLCFLMGMDSLLGLPSWHRWQELLDYAHLVVSTRPGWQPDYPAEVAELLARHQSQQVADLHRLRHGRIWLADNLPVELSATRLRALLATGADPRYLLPPSVAQYIRQQGLYRPA.

Belongs to the NadD family.

The enzyme catalyses nicotinate beta-D-ribonucleotide + ATP + H(+) = deamido-NAD(+) + diphosphate. Its pathway is cofactor biosynthesis; NAD(+) biosynthesis; deamido-NAD(+) from nicotinate D-ribonucleotide: step 1/1. Catalyzes the reversible adenylation of nicotinate mononucleotide (NaMN) to nicotinic acid adenine dinucleotide (NaAD). This is Probable nicotinate-nucleotide adenylyltransferase from Aeromonas hydrophila subsp. hydrophila (strain ATCC 7966 / DSM 30187 / BCRC 13018 / CCUG 14551 / JCM 1027 / KCTC 2358 / NCIMB 9240 / NCTC 8049).